The following is a 311-amino-acid chain: tRNA dimethylallyltransferase (311 aa).

11–18 (GPTASGKS) is an ATP binding site. A substrate-binding site is contributed by 13–18 (TASGKS). Interaction with substrate tRNA regions lie at residues 36–39 (DSMQ) and 160–164 (QRLIR).

Belongs to the IPP transferase family. Monomer. Mg(2+) serves as cofactor.

It carries out the reaction adenosine(37) in tRNA + dimethylallyl diphosphate = N(6)-dimethylallyladenosine(37) in tRNA + diphosphate. Its function is as follows. Catalyzes the transfer of a dimethylallyl group onto the adenine at position 37 in tRNAs that read codons beginning with uridine, leading to the formation of N6-(dimethylallyl)adenosine (i(6)A). This is tRNA dimethylallyltransferase from Rickettsia prowazekii (strain Madrid E).